The following is a 570-amino-acid chain: Pre-mRNA 3'-end-processing factor FIP1 (570 aa).

Residues 1–10 (MSAEEADKTT) show a composition bias toward basic and acidic residues. Residues 1-107 (MSAEEADKTT…SDDDDDDVRV (107 aa)) form a disordered region. The span at 16 to 38 (AGDEEEEWLYGDEGESKETEEEE) shows a compositional bias: acidic residues. Residues 56 to 77 (DAPTTTNNSSDSATPPTTTTTT) are compositionally biased toward low complexity. Over residues 87 to 104 (APGEDEDSESDSDDDDDD) the composition is skewed to acidic residues. Threonine 125 is subject to Phosphothreonine. Phosphoserine is present on serine 247. 3 disordered regions span residues 300-328 (RRRH…VQKM), 371-400 (PNFP…YDGR), and 418-570 (GAVN…EAME). A compositionally biased stretch (pro residues) spans 371–384 (PNFPPPTGGPPPSL). 2 stretches are compositionally biased toward basic and acidic residues: residues 436 to 462 (YPRR…RDHS) and 476 to 506 (DEER…EERH). 2 stretches are compositionally biased toward basic residues: residues 520 to 529 (KSSRSSSRRR) and 538 to 548 (HRRHKHKKSKR). The segment covering 549-562 (SKEGKEPSEERSAD) has biased composition (basic and acidic residues).

Belongs to the FIP1 family.

The protein resides in the nucleus. Functionally, involved in mRNA processing. The chain is Pre-mRNA 3'-end-processing factor FIP1 (fip1l1) from Danio rerio (Zebrafish).